A 188-amino-acid chain; its full sequence is Protein GrpE 2 (188 aa).

A compositionally biased stretch (basic and acidic residues) spans 1–29 (MDNQEKKTNYQNTDKENDLEKNKEKKNDE). A disordered region spans residues 1 to 33 (MDNQEKKTNYQNTDKENDLEKNKEKKNDESIFQ).

It belongs to the GrpE family. Homodimer.

The protein resides in the cytoplasm. Functionally, participates actively in the response to hyperosmotic and heat shock by preventing the aggregation of stress-denatured proteins, in association with DnaK and GrpE. It is the nucleotide exchange factor for DnaK and may function as a thermosensor. Unfolded proteins bind initially to DnaJ; upon interaction with the DnaJ-bound protein, DnaK hydrolyzes its bound ATP, resulting in the formation of a stable complex. GrpE releases ADP from DnaK; ATP binding to DnaK triggers the release of the substrate protein, thus completing the reaction cycle. Several rounds of ATP-dependent interactions between DnaJ, DnaK and GrpE are required for fully efficient folding. The polypeptide is Protein GrpE 2 (Buchnera aphidicola subsp. Schizaphis graminum (strain Sg)).